The sequence spans 177 residues: O-acetyl-ADP-ribose deacetylase (177 aa).

The Macro domain occupies 1–175; that stretch reads MNSRIHVIHG…LYQRLLTQQG (175 aa). Substrate contacts are provided by residues 11–12, N25, 33–35, and 122–126; these read DI, GVD, and STGVY. Residue D35 is the Proton acceptor of the active site.

It belongs to the MacroD-type family. YmdB subfamily. As to quaternary structure, homodimer. Interacts with RNase III.

The catalysed reaction is 3''-O-acetyl-ADP-D-ribose + H2O = ADP-D-ribose + acetate + H(+). It catalyses the reaction 2''-O-acetyl-ADP-D-ribose + H2O = ADP-D-ribose + acetate + H(+). Deacetylates O-acetyl-ADP ribose to yield ADP-ribose and free acetate. Down-regulates ribonuclease 3 (RNase III) activity. Acts by interacting directly with the region of the ribonuclease that is required for dimerization/activation. The polypeptide is O-acetyl-ADP-ribose deacetylase (Citrobacter rodentium (strain ICC168) (Citrobacter freundii biotype 4280)).